The chain runs to 1254 residues: Vitamin B12-dependent ribonucleotide reductase (1254 aa).

Residues serine 153, 198 to 199 (AC), glycine 230, 474 to 478 (NPCSE), and 675 to 679 (PTGTI) contribute to the substrate site. Cysteine 199 and cysteine 487 are oxidised to a cystine. Residue asparagine 474 is the Proton acceptor of the active site. Cysteine 476 (cysteine radical intermediate) is an active-site residue. Glutamate 478 acts as the Proton acceptor in catalysis.

It belongs to the ribonucleoside diphosphate reductase class-2 family. The cofactor is adenosylcob(III)alamin.

The enzyme catalyses a 2'-deoxyribonucleoside 5'-diphosphate + [thioredoxin]-disulfide + H2O = a ribonucleoside 5'-diphosphate + [thioredoxin]-dithiol. In terms of biological role, catalyzes the reduction of ribonucleotides to deoxyribonucleotides. May function to provide a pool of deoxyribonucleotide precursors for DNA repair during oxygen limitation and/or for immediate growth after restoration of oxygen. The chain is Vitamin B12-dependent ribonucleotide reductase (nrdJ) from Bradyrhizobium diazoefficiens (strain JCM 10833 / BCRC 13528 / IAM 13628 / NBRC 14792 / USDA 110).